Consider the following 267-residue polypeptide: Mediator of RNA polymerase II transcription subunit 6 (267 aa).

The interval 202-267 is disordered; the sequence is PLPQMTNNPT…DVPPEKKMKL (66 aa). Positions 205–218 are enriched in polar residues; the sequence is QMTNNPTGGNPSDT.

The protein belongs to the Mediator complex subunit 6 family. In terms of assembly, component of the Mediator complex.

Its subcellular location is the nucleus. Its function is as follows. Component of the Mediator complex, a coactivator involved in the regulated transcription of nearly all RNA polymerase II-dependent genes. Mediator functions as a bridge to convey information from gene-specific regulatory proteins to the basal RNA polymerase II transcription machinery. Mediator is recruited to promoters by direct interactions with regulatory proteins and serves as a scaffold for the assembly of a functional preinitiation complex with RNA polymerase II and the general transcription factors. The sequence is that of Mediator of RNA polymerase II transcription subunit 6 (MED6) from Anopheles gambiae (African malaria mosquito).